Consider the following 282-residue polypeptide: Pyridoxal 5'-phosphate synthase subunit PdxS (282 aa).

D-ribose 5-phosphate is bound at residue Asp-14. The active-site Schiff-base intermediate with D-ribose 5-phosphate is the Lys-71. D-ribose 5-phosphate is bound at residue Gly-143. Arg-155 contacts D-glyceraldehyde 3-phosphate. D-ribose 5-phosphate-binding positions include Gly-204 and Gly-225–Ser-226.

Belongs to the PdxS/SNZ family. As to quaternary structure, in the presence of PdxT, forms a dodecamer of heterodimers.

It catalyses the reaction aldehydo-D-ribose 5-phosphate + D-glyceraldehyde 3-phosphate + L-glutamine = pyridoxal 5'-phosphate + L-glutamate + phosphate + 3 H2O + H(+). It participates in cofactor biosynthesis; pyridoxal 5'-phosphate biosynthesis. In terms of biological role, catalyzes the formation of pyridoxal 5'-phosphate from ribose 5-phosphate (RBP), glyceraldehyde 3-phosphate (G3P) and ammonia. The ammonia is provided by the PdxT subunit. Can also use ribulose 5-phosphate and dihydroxyacetone phosphate as substrates, resulting from enzyme-catalyzed isomerization of RBP and G3P, respectively. The chain is Pyridoxal 5'-phosphate synthase subunit PdxS from Treponema denticola (strain ATCC 35405 / DSM 14222 / CIP 103919 / JCM 8153 / KCTC 15104).